The following is a 433-amino-acid chain: Phosphomethylpyrimidine synthase 2 (433 aa).

Residues Asn66, Met94, Tyr123, His162, 184-186 (SRG), 225-228 (DALR), and Glu264 each bind substrate. His268 is a Zn(2+) binding site. Tyr291 contributes to the substrate binding site. Residue His332 coordinates Zn(2+). Positions 408, 411, and 415 each coordinate [4Fe-4S] cluster.

Belongs to the ThiC family. It depends on [4Fe-4S] cluster as a cofactor.

The enzyme catalyses 5-amino-1-(5-phospho-beta-D-ribosyl)imidazole + S-adenosyl-L-methionine = 4-amino-2-methyl-5-(phosphooxymethyl)pyrimidine + CO + 5'-deoxyadenosine + formate + L-methionine + 3 H(+). The protein operates within cofactor biosynthesis; thiamine diphosphate biosynthesis. Functionally, catalyzes the synthesis of the hydroxymethylpyrimidine phosphate (HMP-P) moiety of thiamine from aminoimidazole ribotide (AIR) in a radical S-adenosyl-L-methionine (SAM)-dependent reaction. This Saccharolobus solfataricus (strain ATCC 35092 / DSM 1617 / JCM 11322 / P2) (Sulfolobus solfataricus) protein is Phosphomethylpyrimidine synthase 2.